The primary structure comprises 251 residues: Sugar fermentation stimulation protein homolog (251 aa).

The protein belongs to the SfsA family.

The protein is Sugar fermentation stimulation protein homolog of Symbiobacterium thermophilum (strain DSM 24528 / JCM 14929 / IAM 14863 / T).